The following is a 186-amino-acid chain: NADH-quinone oxidoreductase subunit B (186 aa).

The [4Fe-4S] cluster site is built by C44, C45, C110, and C139.

This sequence belongs to the complex I 20 kDa subunit family. As to quaternary structure, NDH-1 is composed of 14 different subunits. Subunits NuoB, C, D, E, F, and G constitute the peripheral sector of the complex. The cofactor is [4Fe-4S] cluster.

The protein localises to the cell inner membrane. It carries out the reaction a quinone + NADH + 5 H(+)(in) = a quinol + NAD(+) + 4 H(+)(out). Functionally, NDH-1 shuttles electrons from NADH, via FMN and iron-sulfur (Fe-S) centers, to quinones in the respiratory chain. The immediate electron acceptor for the enzyme in this species is believed to be ubiquinone. Couples the redox reaction to proton translocation (for every two electrons transferred, four hydrogen ions are translocated across the cytoplasmic membrane), and thus conserves the redox energy in a proton gradient. The polypeptide is NADH-quinone oxidoreductase subunit B (Leptospira borgpetersenii serovar Hardjo-bovis (strain JB197)).